The following is a 596-amino-acid chain: Serine/arginine (SR)-type shuttling mRNA binding protein (596 aa).

Positions M1–T11 are enriched in polar residues. 2 disordered regions span residues M1–S83 and D244–P279. Basic and acidic residues-rich tracts occupy residues H12–A23 and S42–N66. The RRM 1 domain maps to F182–E246. Gly residues predominate over residues P259–S275. The region spanning T302–F379 is the RRM 2 domain. Residues G458–P478 form a disordered region. The RRM 3 domain occupies Q480 to R556. Gly residues predominate over residues G563 to D572. A disordered region spans residues G563–G596.

It localises to the nucleus. In terms of biological role, binds to intron-containing transcripts and is involved in quality control for the export of spliced mRNAs from the nucleus. Binds to pre-mRNAs until splicing is completed or until faulty mRNAs are degraded. The polypeptide is Serine/arginine (SR)-type shuttling mRNA binding protein (Mycosarcoma maydis (Corn smut fungus)).